Consider the following 200-residue polypeptide: Dephospho-CoA kinase (200 aa).

One can recognise a DPCK domain in the interval arginine 3–asparagine 200. Glycine 11–threonine 16 is a binding site for ATP.

The protein belongs to the CoaE family.

It localises to the cytoplasm. The catalysed reaction is 3'-dephospho-CoA + ATP = ADP + CoA + H(+). The protein operates within cofactor biosynthesis; coenzyme A biosynthesis; CoA from (R)-pantothenate: step 5/5. In terms of biological role, catalyzes the phosphorylation of the 3'-hydroxyl group of dephosphocoenzyme A to form coenzyme A. In Corynebacterium glutamicum (strain ATCC 13032 / DSM 20300 / JCM 1318 / BCRC 11384 / CCUG 27702 / LMG 3730 / NBRC 12168 / NCIMB 10025 / NRRL B-2784 / 534), this protein is Dephospho-CoA kinase.